A 348-amino-acid chain; its full sequence is Anthranilate phosphoribosyltransferase (348 aa).

Residues G84, 87 to 88 (GD), T92, 94 to 97 (NITT), 112 to 120 (KHGNRSVSS), and S124 each bind 5-phospho-alpha-D-ribose 1-diphosphate. G84 lines the anthranilate pocket. T96 lines the Mg(2+) pocket. N115 serves as a coordination point for anthranilate. R170 provides a ligand contact to anthranilate. D228 and E229 together coordinate Mg(2+).

The protein belongs to the anthranilate phosphoribosyltransferase family. As to quaternary structure, homodimer. It depends on Mg(2+) as a cofactor.

It carries out the reaction N-(5-phospho-beta-D-ribosyl)anthranilate + diphosphate = 5-phospho-alpha-D-ribose 1-diphosphate + anthranilate. The protein operates within amino-acid biosynthesis; L-tryptophan biosynthesis; L-tryptophan from chorismate: step 2/5. Functionally, catalyzes the transfer of the phosphoribosyl group of 5-phosphorylribose-1-pyrophosphate (PRPP) to anthranilate to yield N-(5'-phosphoribosyl)-anthranilate (PRA). The polypeptide is Anthranilate phosphoribosyltransferase (Corynebacterium glutamicum (strain R)).